A 200-amino-acid polypeptide reads, in one-letter code: 3-isopropylmalate dehydratase small subunit (200 aa).

Belongs to the LeuD family. LeuD type 1 subfamily. As to quaternary structure, heterodimer of LeuC and LeuD.

It catalyses the reaction (2R,3S)-3-isopropylmalate = (2S)-2-isopropylmalate. Its pathway is amino-acid biosynthesis; L-leucine biosynthesis; L-leucine from 3-methyl-2-oxobutanoate: step 2/4. Catalyzes the isomerization between 2-isopropylmalate and 3-isopropylmalate, via the formation of 2-isopropylmaleate. The sequence is that of 3-isopropylmalate dehydratase small subunit from Actinobacillus pleuropneumoniae serotype 7 (strain AP76).